A 215-amino-acid chain; its full sequence is Pyridoxine/pyridoxamine 5'-phosphate oxidase (215 aa).

Substrate-binding positions include 9–12 (RRDY) and lysine 69. FMN contacts are provided by residues 64 to 69 (RILLLK), 79 to 80 (FT), lysine 86, and glutamine 108. Substrate is bound by residues tyrosine 126, arginine 130, and serine 134. Residues 143 to 144 (QS) and tryptophan 188 contribute to the FMN site. 194–196 (RLH) provides a ligand contact to substrate. Arginine 198 provides a ligand contact to FMN.

This sequence belongs to the pyridoxamine 5'-phosphate oxidase family. Homodimer. FMN is required as a cofactor.

It catalyses the reaction pyridoxamine 5'-phosphate + O2 + H2O = pyridoxal 5'-phosphate + H2O2 + NH4(+). It carries out the reaction pyridoxine 5'-phosphate + O2 = pyridoxal 5'-phosphate + H2O2. It participates in cofactor metabolism; pyridoxal 5'-phosphate salvage; pyridoxal 5'-phosphate from pyridoxamine 5'-phosphate: step 1/1. Its pathway is cofactor metabolism; pyridoxal 5'-phosphate salvage; pyridoxal 5'-phosphate from pyridoxine 5'-phosphate: step 1/1. In terms of biological role, catalyzes the oxidation of either pyridoxine 5'-phosphate (PNP) or pyridoxamine 5'-phosphate (PMP) into pyridoxal 5'-phosphate (PLP). The polypeptide is Pyridoxine/pyridoxamine 5'-phosphate oxidase (Pseudomonas fluorescens (strain SBW25)).